Consider the following 307-residue polypeptide: NAD kinase 1 (307 aa).

Catalysis depends on Asp-67, which acts as the Proton acceptor. NAD(+)-binding positions include 67-68, 149-150, Arg-160, Asp-181, and 192-197; these read DG, NE, and TCYTSS.

The protein belongs to the NAD kinase family. The cofactor is a divalent metal cation.

The protein localises to the cytoplasm. It carries out the reaction NAD(+) + ATP = ADP + NADP(+) + H(+). Functionally, involved in the regulation of the intracellular balance of NAD and NADP, and is a key enzyme in the biosynthesis of NADP. Catalyzes specifically the phosphorylation on 2'-hydroxyl of the adenosine moiety of NAD to yield NADP. Essential for photoheterotrophic growth. Has a significant function in the oxidative pentose phosphate (OPP) pathway for glucose catabolism under photoheterotrophic conditions. Is also involved in cellular redox homeostasis. The sequence is that of NAD kinase 1 from Synechocystis sp. (strain ATCC 27184 / PCC 6803 / Kazusa).